Here is a 185-residue protein sequence, read N- to C-terminus: Ribosome-recycling factor (185 aa).

Belongs to the RRF family.

The protein localises to the cytoplasm. In terms of biological role, responsible for the release of ribosomes from messenger RNA at the termination of protein biosynthesis. May increase the efficiency of translation by recycling ribosomes from one round of translation to another. The protein is Ribosome-recycling factor of Buchnera aphidicola subsp. Acyrthosiphon pisum (strain 5A).